The sequence spans 202 residues: MADS-box transcription factor 33 (202 aa).

The 61-residue stretch at 1–61 (MVRGKVQMRR…GKLHELATNG (61 aa)) folds into the MADS-box domain. The K-box domain occupies 87-177 (QQVAEQGIFL…QEKVKEQQKL (91 aa)).

Expressed in seedling roots.

The protein resides in the nucleus. In terms of biological role, probable transcription factor. The polypeptide is MADS-box transcription factor 33 (MADS33) (Oryza sativa subsp. japonica (Rice)).